A 445-amino-acid chain; its full sequence is tRNA modification GTPase MnmE (445 aa).

(6S)-5-formyl-5,6,7,8-tetrahydrofolate-binding residues include Arg-20, Glu-79, and Lys-119. One can recognise a TrmE-type G domain in the interval 215–371 (GLKLAIIGPP…ILKNIENIAE (157 aa)). Asn-225 lines the K(+) pocket. GTP is bound by residues 225 to 230 (NAGKSS), 244 to 250 (SNIAGTT), and 269 to 272 (DTAG). Ser-229 contacts Mg(2+). 3 residues coordinate K(+): Ser-244, Ile-246, and Thr-249. Thr-250 contacts Mg(2+). (6S)-5-formyl-5,6,7,8-tetrahydrofolate is bound at residue Lys-445.

The protein belongs to the TRAFAC class TrmE-Era-EngA-EngB-Septin-like GTPase superfamily. TrmE GTPase family. As to quaternary structure, homodimer. Heterotetramer of two MnmE and two MnmG subunits. K(+) is required as a cofactor.

It is found in the cytoplasm. Functionally, exhibits a very high intrinsic GTPase hydrolysis rate. Involved in the addition of a carboxymethylaminomethyl (cmnm) group at the wobble position (U34) of certain tRNAs, forming tRNA-cmnm(5)s(2)U34. This chain is tRNA modification GTPase MnmE, found in Rickettsia canadensis (strain McKiel).